The sequence spans 177 residues: CDP-diacylglycerol--serine O-phosphatidyltransferase (177 aa).

The next 5 helical transmembrane spans lie at I4 to L24, I28 to A48, M77 to T97, L116 to F136, and P140 to F160.

The protein belongs to the CDP-alcohol phosphatidyltransferase class-I family.

It localises to the cell membrane. The enzyme catalyses a CDP-1,2-diacyl-sn-glycerol + L-serine = a 1,2-diacyl-sn-glycero-3-phospho-L-serine + CMP + H(+). In Bacillus subtilis (strain 168), this protein is CDP-diacylglycerol--serine O-phosphatidyltransferase (pssA).